A 574-amino-acid chain; its full sequence is Septation ring formation regulator EzrA (574 aa).

Residues 1–7 (MSSGLIL) are Extracellular-facing. Residues 8-26 (LIVAIVLLVIIAYLVGVII) form a helical membrane-spanning segment. Topologically, residues 27–574 (RKRNDTLITS…YEKTRERIRF (548 aa)) are cytoplasmic. Coiled-coil stretches lie at residues 102 to 131 (NFIR…REAL), 161 to 190 (ENED…FVAL), 276 to 379 (VTLD…QQEK), and 459 to 493 (QLEA…NLEE).

It belongs to the EzrA family.

It is found in the cell membrane. Its function is as follows. Negative regulator of FtsZ ring formation; modulates the frequency and position of FtsZ ring formation. Inhibits FtsZ ring formation at polar sites. Interacts either with FtsZ or with one of its binding partners to promote depolymerization. The polypeptide is Septation ring formation regulator EzrA (Streptococcus equi subsp. zooepidemicus (strain MGCS10565)).